The sequence spans 835 residues: Cap-specific mRNA (nucleoside-2'-O-)-methyltransferase 1 (835 aa).

The Bipartite nuclear localization signal signature appears at 2-19 (RRRNDPECTAPIKKQKKR). Residues 24 to 68 (ALNLSAASGDEPPSSVNHAAKASTTSLSGSDSETEGKQHGSDSFD) are disordered. Phosphoserine is present on residues Ser-28, Ser-31, Ser-53, Ser-66, and Ser-91. Polar residues predominate over residues 37 to 54 (SSVNHAAKASTTSLSGSD). The span at 57–68 (TEGKQHGSDSFD) shows a compositional bias: basic and acidic residues. In terms of domain architecture, G-patch spans 87 to 133 (YNSVSQKLMAKMGFREGEGLGKYSQGRKDIVEASNQKGRRGLGLTLQ). The residue at position 108 (Lys-108) is an N6-acetyllysine. Residues 203 to 207 (KSVFD) and Arg-218 contribute to the substrate site. A RrmJ-type SAM-dependent 2'-O-MTase domain is found at 231–450 (FFLNRAAMKM…ERYVVCKGLK (220 aa)). Asn-234 is an S-adenosyl-L-methionine binding site. The active site involves Lys-239. S-adenosyl-L-methionine-binding positions include 277–283 (CAGPGGF) and 335–336 (DI). Asp-364 is an active-site residue. 374 to 376 (NLQ) lines the substrate pocket. Catalysis depends on Lys-404, which acts as the Proton acceptor. Asn-439 is a binding site for substrate. Residues 727–835 (SSGTPKLSYT…VLSFIQTHSA (109 aa)) form an interaction with POLR2A region. Residues 752 to 786 (RTVNEPWTMGFSKSFKRKFFYNKKTKISTFDLPAD) form the WW domain.

As to quaternary structure, interacts with POLR2A (via C-terminus).

It localises to the nucleus. It carries out the reaction a 5'-end (N(7)-methyl 5'-triphosphoguanosine)-ribonucleoside in mRNA + S-adenosyl-L-methionine = a 5'-end (N(7)-methyl 5'-triphosphoguanosine)-(2'-O-methyl-ribonucleoside) in mRNA + S-adenosyl-L-homocysteine + H(+). Functionally, S-adenosyl-L-methionine-dependent methyltransferase that mediates mRNA cap1 2'-O-ribose methylation to the 5'-cap structure of mRNAs. Methylates the ribose of the first nucleotide of a m(7)GpppG-capped mRNA and small nuclear RNA (snRNA) to produce m(7)GpppRm (cap1). Displays a preference for cap0 transcripts. Cap1 modification is linked to higher levels of translation. May be involved in the interferon response pathway. The polypeptide is Cap-specific mRNA (nucleoside-2'-O-)-methyltransferase 1 (CMTR1) (Ailuropoda melanoleuca (Giant panda)).